The sequence spans 344 residues: MEHALTLSQHTREYAGTDPLRLAVAAAIDAIAEASIEMAELIGRGALAGITGEAQGSSNADGDVQKDLDVRCDEMILEALKKLPFAALASEESEALVYGDPMAPISVAFDPLDGSSNIDTNATVGTIFSIIPTIVGVAPFTAPGKVQLAAGFVVYGPQTSLVLTTGDGVDIFTLDRAAHVYKRIRHKVRIPTDTPEFAINASNHRHWEQPVRDFVEECLAGTEGPRSKDFNMRWLGSLVAEAYRILTRGGVFLYPGDGRPGYSEGRLRLLYECHPMAFIMEQAGGGASTGREHVLDLAARTIHQRAPLIMGSIDKVNRVELLHNDPDAASRSAPLFARRGLFRV.

Mg(2+)-binding residues include Glu91, Asp110, Leu112, and Asp113. Substrate contacts are provided by residues 113-116 (DGSS) and Asn200. Mg(2+) is bound at residue Glu272.

The protein belongs to the FBPase class 1 family. Homotetramer. Requires Mg(2+) as cofactor.

It is found in the cytoplasm. The catalysed reaction is beta-D-fructose 1,6-bisphosphate + H2O = beta-D-fructose 6-phosphate + phosphate. It functions in the pathway carbohydrate biosynthesis; Calvin cycle. In Rhodopseudomonas palustris (strain BisA53), this protein is Fructose-1,6-bisphosphatase class 1.